Here is a 1207-residue protein sequence, read N- to C-terminus: DNA-directed RNA polymerase subunit beta' (1207 aa).

Positions 60, 62, 75, and 78 each coordinate Zn(2+). Mg(2+)-binding residues include D449, D451, and D453. Residues C822, C896, C903, and C906 each coordinate Zn(2+).

The protein belongs to the RNA polymerase beta' chain family. In terms of assembly, the RNAP catalytic core consists of 2 alpha, 1 beta, 1 beta' and 1 omega subunit. When a sigma factor is associated with the core the holoenzyme is formed, which can initiate transcription. Requires Mg(2+) as cofactor. It depends on Zn(2+) as a cofactor.

It carries out the reaction RNA(n) + a ribonucleoside 5'-triphosphate = RNA(n+1) + diphosphate. Functionally, DNA-dependent RNA polymerase catalyzes the transcription of DNA into RNA using the four ribonucleoside triphosphates as substrates. The chain is DNA-directed RNA polymerase subunit beta' from Staphylococcus aureus (strain USA300).